Consider the following 324-residue polypeptide: Ribosomal RNA small subunit methyltransferase H (324 aa).

Residues 35–37 (GGH), D55, F85, D103, and Q110 each bind S-adenosyl-L-methionine.

The protein belongs to the methyltransferase superfamily. RsmH family.

The protein localises to the cytoplasm. It carries out the reaction cytidine(1402) in 16S rRNA + S-adenosyl-L-methionine = N(4)-methylcytidine(1402) in 16S rRNA + S-adenosyl-L-homocysteine + H(+). In terms of biological role, specifically methylates the N4 position of cytidine in position 1402 (C1402) of 16S rRNA. In Solidesulfovibrio magneticus (strain ATCC 700980 / DSM 13731 / RS-1) (Desulfovibrio magneticus), this protein is Ribosomal RNA small subunit methyltransferase H.